Here is a 312-residue protein sequence, read N- to C-terminus: Ribosomal protein L11 methyltransferase (312 aa).

Positions 160, 181, 203, and 246 each coordinate S-adenosyl-L-methionine.

This sequence belongs to the methyltransferase superfamily. PrmA family.

The protein localises to the cytoplasm. It carries out the reaction L-lysyl-[protein] + 3 S-adenosyl-L-methionine = N(6),N(6),N(6)-trimethyl-L-lysyl-[protein] + 3 S-adenosyl-L-homocysteine + 3 H(+). Methylates ribosomal protein L11. The polypeptide is Ribosomal protein L11 methyltransferase (Staphylococcus aureus (strain MRSA252)).